Consider the following 181-residue polypeptide: U1 small nuclear ribonucleoprotein C (181 aa).

The Matrin-type zinc finger occupies 2–34 (PKCDYCDVYLTHDSMSVRKAHNSGRNHLRNVVD). 2 stretches are compositionally biased toward pro residues: residues 129–143 (PGMP…PGGL) and 150–174 (PIPP…PPPG). The tract at residues 129–181 (PGMPAGMPFPPPGGLPPNFQFPIPPPGGFPGMPPPGQGFPGMPPPGGNHDERR) is disordered.

This sequence belongs to the U1 small nuclear ribonucleoprotein C family. U1 snRNP is composed of the 7 core Sm proteins B/B', D1, D2, D3, E, F and G that assemble in a heptameric protein ring on the Sm site of the small nuclear RNA to form the core snRNP, and at least 3 U1 snRNP-specific proteins U1-70K, U1-A and U1-C. U1-C interacts with U1 snRNA and the 5' splice-site region of the pre-mRNA.

It is found in the nucleus. Component of the spliceosomal U1 snRNP, which is essential for recognition of the pre-mRNA 5' splice-site and the subsequent assembly of the spliceosome. U1-C is directly involved in initial 5' splice-site recognition for both constitutive and regulated alternative splicing. The interaction with the 5' splice-site seems to precede base-pairing between the pre-mRNA and the U1 snRNA. Stimulates commitment or early (E) complex formation by stabilizing the base pairing of the 5' end of the U1 snRNA and the 5' splice-site region. This Sclerotinia sclerotiorum (strain ATCC 18683 / 1980 / Ss-1) (White mold) protein is U1 small nuclear ribonucleoprotein C.